A 1912-amino-acid polypeptide reads, in one-letter code: Protein javelin (1912 aa).

10 disordered regions span residues 1–32, 89–145, 298–377, 460–515, 545–586, 764–920, 965–1010, 1257–1297, 1486–1507, and 1881–1912; these read MGNG…QHNY, GTGL…VGGA, RSRH…HRLS, QSRR…SLSE, TTRT…TLRQ, SYNQ…EAPV, IQEN…GKPL, GINS…GGAA, EQQE…QYED, and YDPS…DDKM. 2 stretches are compositionally biased toward basic residues: residues 97–133 and 299–313; these read QQLH…HPHA and SRHK…KKPP. Residues 339–354 are compositionally biased toward polar residues; it reads ADDTQSQRSNSATCDS. The segment covering 355-374 has biased composition (low complexity); it reads HQQQQQQQHQPQQQHQQQQH. Positions 489–498 are enriched in polar residues; it reads EHSQSSVFPE. The segment covering 499-512 has biased composition (low complexity); the sequence is TTTSNSDDQTDSPS. Over residues 553 to 566 the composition is skewed to acidic residues; that stretch reads SEEGEEEQTGEEVV. Residues 568–586 show a composition bias toward polar residues; the sequence is SLTTPTEPQTSDSESTLRQ. 2 stretches are compositionally biased toward basic and acidic residues: residues 772-792 and 802-869; these read QRKE…DSIR and RQRE…RKEE. The segment covering 890–904 has biased composition (acidic residues); it reads SQQEDTVADVEEEDN. The segment covering 965-979 has biased composition (basic and acidic residues); the sequence is IQENKETSQRIEPKP. Low complexity predominate over residues 981 to 990; the sequence is PKTNSNSSST. Acidic residues-rich tracts occupy residues 1494 to 1507 and 1903 to 1912; these read LEEE…QYED and ELYDSLDDKM.

It localises to the cytoplasm. It is found in the cytoskeleton. Functionally, important for normal assembly of actin bundles during bristle formation. This is Protein javelin from Drosophila melanogaster (Fruit fly).